The following is a 380-amino-acid chain: Nucleoporin Nup43 (380 aa).

At Met1 the chain carries N-acetylmethionine. 6 WD repeats span residues 8–57, 72–110, 119–166, 170–208, 215–255, and 259–299; these read FVSQ…NLDS, RHHG…QTLS, HYHT…AVRT, ADSS…SEPC, GDRV…MPVS, and AHEA…PEKS.

Component of the Nup107-160 subcomplex of the nuclear pore complex (NPC). The Nup107-160 subcomplex includes NUP160, NUP133, NUP107, NUP98, NUP85, NUP43, NUP37, SEH1 and SEC13.

The protein resides in the chromosome. It localises to the centromere. The protein localises to the kinetochore. It is found in the nucleus. Its subcellular location is the nuclear pore complex. In terms of biological role, component of the Nup107-160 subcomplex of the nuclear pore complex (NPC). The Nup107-160 subcomplex is required for the assembly of a functional NPC. The Nup107-160 subcomplex is also required for normal kinetochore microtubule attachment, mitotic progression and chromosome segregation. The chain is Nucleoporin Nup43 (Nup43) from Mus musculus (Mouse).